Consider the following 196-residue polypeptide: Superantigen-like protein 11 (196 aa).

Residues 65–167 form a sialyl Lewis X-binding region; that stretch reads LDVFVVREGS…RVTMKNGDFY (103 aa).

The protein belongs to the staphylococcal/streptococcal toxin family. As to quaternary structure, homodimer (via its C-terminal domain). Interacts with host FCAR and SELPLG (via sialyl Lewis X).

It is found in the secreted. In terms of biological role, secreted protein that plays a role in the inhibition of host immune system. Targets myeloid cells such as monocytes or granulocytes through binding with sialyllactosamine-containing glycoproteins. Prevents initial rolling of neutrophils toward the site of infection by interacting with host SELPLG. Disrupts neutrophil motility by induction of cell adhesion via interacting with glycans but independently of SELPLG. The sequence is that of Superantigen-like protein 11 from Staphylococcus aureus.